The primary structure comprises 608 residues: Bifunctional lycopene cyclase/phytoene synthase (608 aa).

The lycopene beta-cyclase stretch occupies residues 1–240; sequence MSILTYLEFH…LVFATCAIDR (240 aa). 7 helical membrane passes run 3–23, 37–56, 80–97, 117–137, 150–170, 175–195, and 218–238; these read ILTY…ALCW, YKFL…NYIV, YMFF…SNFV, LLVR…AWHL, ILWY…EYIL, AVLL…IVAI, and VEEC…TCAI. The interval 247-608 is phytoene synthase; that stretch reads LYKSSVQNQN…ARKIKSFFVD (362 aa).

The protein in the N-terminal section; belongs to the lycopene beta-cyclase family. This sequence in the C-terminal section; belongs to the phytoene/squalene synthase family.

It localises to the membrane. The enzyme catalyses all-trans-lycopene = gamma-carotene. It carries out the reaction gamma-carotene = all-trans-beta-carotene. It catalyses the reaction 2 (2E,6E,10E)-geranylgeranyl diphosphate = 15-cis-phytoene + 2 diphosphate. It participates in carotenoid biosynthesis; beta-carotene biosynthesis. The protein operates within carotenoid biosynthesis; phytoene biosynthesis; all-trans-phytoene from geranylgeranyl diphosphate: step 1/1. In terms of biological role, bifunctional enzyme that catalyzes the reactions from geranylgeranyl diphosphate to phytoene (phytoene synthase) and lycopene to beta-carotene via the intermediate gamma-carotene (lycopene cyclase). The protein is Bifunctional lycopene cyclase/phytoene synthase of Blakeslea trispora (Choanephora trispora).